A 157-amino-acid chain; its full sequence is MQLTVKALQGRDCSLQVPEDELVSTLKQLVSEKLNVPVRQQRLLFKGKALADGKRLSDYSIGPNSKLNLVVKPLEKVLLEEGTGRRLADSPPPQVWQLISKVLARHFSAADASRVLEQLQRDYERSLSRLTLDDIERLAGRFLHPEVTETMEKGFSK.

The Ubiquitin-like domain maps to 1–76; that stretch reads MQLTVKALQG…LNLVVKPLEK (76 aa). Lys48 participates in a covalent cross-link: Glycyl lysine isopeptide (Lys-Gly) (interchain with G-Cter in ubiquitin). Ser90 bears the Phosphoserine mark. The interval 96-138 is required and sufficient for interaction with BAG6; it reads WQLISKVLARHFSAADASRVLEQLQRDYERSLSRLTLDDIERL.

Component of the BAG6/BAT3 complex, at least composed of BAG6, UBL4A and GET4/TRC35. Interacts with BAG6; the interaction is direct and required for UBL4A protein stability. Interacts with USP13; may be indirect via BAG6. In terms of processing, polyubiquitinated. Ubiquitination by AMFR and deubiquitination by USP13 may regulate the interaction between the BAG6/BAT complex and SGTA and therefore may regulate client proteins fate.

It localises to the cytoplasm. The protein localises to the cytosol. The protein resides in the nucleus. Functionally, as part of a cytosolic protein quality control complex, the BAG6/BAT3 complex, maintains misfolded and hydrophobic patches-containing proteins in a soluble state and participates in their proper delivery to the endoplasmic reticulum or alternatively can promote their sorting to the proteasome where they undergo degradation. The BAG6/BAT3 complex is involved in the post-translational delivery of tail-anchored/type II transmembrane proteins to the endoplasmic reticulum membrane. Recruited to ribosomes, it interacts with the transmembrane region of newly synthesized tail-anchored proteins and together with SGTA and ASNA1 mediates their delivery to the endoplasmic reticulum. Client proteins that cannot be properly delivered to the endoplasmic reticulum are ubiquitinated and sorted to the proteasome. Similarly, the BAG6/BAT3 complex also functions as a sorting platform for proteins of the secretory pathway that are mislocalized to the cytosol either delivering them to the proteasome for degradation or to the endoplasmic reticulum. The BAG6/BAT3 complex also plays a role in the endoplasmic reticulum-associated degradation (ERAD), a quality control mechanism that eliminates unwanted proteins of the endoplasmic reticulum through their retrotranslocation to the cytosol and their targeting to the proteasome. It maintains these retrotranslocated proteins in an unfolded yet soluble state condition in the cytosol to ensure their proper delivery to the proteasome. This is Ubiquitin-like protein 4A (UBL4A) from Callithrix jacchus (White-tufted-ear marmoset).